The primary structure comprises 879 residues: DNA mismatch repair protein MutS (879 aa).

629-636 is a binding site for ATP; it reads GPNMAGKS.

It belongs to the DNA mismatch repair MutS family.

This protein is involved in the repair of mismatches in DNA. It is possible that it carries out the mismatch recognition step. This protein has a weak ATPase activity. This chain is DNA mismatch repair protein MutS, found in Ruegeria sp. (strain TM1040) (Silicibacter sp.).